Here is a 160-residue protein sequence, read N- to C-terminus: uncharacterized protein (160 aa).

4 residues coordinate Zn(2+): cysteine 26, cysteine 28, cysteine 50, and histidine 61. The segment at cysteine 26–alanine 69 adopts a GRF-type; atypical zinc-finger fold.

This is an uncharacterized protein from Arabidopsis thaliana (Mouse-ear cress).